We begin with the raw amino-acid sequence, 68 residues long: Head completion protein (68 aa).

It belongs to the lambda phage gpW family. Monomer in solution, assembles into hexamers on the prohead. May bind FII and portal protein (Potential).

The protein localises to the virion. Functionally, plays a role in morphogenesis of the virion head after genome packaging. Presumably interacts with the portal vertex to stabilize the packaged DNA within the head after packaging. Probably binds to the head-tail connector protein FII. The polypeptide is Head completion protein (W) (Escherichia coli (Bacteriophage lambda)).